Here is a 234-residue protein sequence, read N- to C-terminus: MAKLTKRMRTIREKVEVTKDYEINEAIALLKELATAKFVESVDVAVNLGIDARKSDQNVRGATVLPNGTGRDVRVAVFTQGANAEAAKEAGAELVGMEDLAELVKKGEMNFDVVVASPDAMRVVGQLGQILGPRGLMPNPKTGTVTPNVAEAVKNAKAGQVRYRNDKNGIIHTTIGKVDFTAEQLQQNLESLIVALKKAKPSQAKGVYVKKVSISTTMGAGVAVDQNTLSTTVA.

It belongs to the universal ribosomal protein uL1 family. In terms of assembly, part of the 50S ribosomal subunit.

Functionally, binds directly to 23S rRNA. The L1 stalk is quite mobile in the ribosome, and is involved in E site tRNA release. In terms of biological role, protein L1 is also a translational repressor protein, it controls the translation of the L11 operon by binding to its mRNA. The chain is Large ribosomal subunit protein uL1 from Pseudoalteromonas translucida (strain TAC 125).